Consider the following 300-residue polypeptide: Centromere protein O (300 aa).

Coiled coils occupy residues 18 to 42 (LAHLERLETQVSRSRKQSEELQSVQ) and 83 to 109 (NQTVEINEQEALEEKLENVKAILQAYH). S35 carries the phosphoserine modification.

Belongs to the CENP-O/MCM21 family. As to quaternary structure, component of the CENPA-CAD complex, composed of CENPI, CENPK, CENPL, CENPO, CENPP, CENPQ, CENPR and CENPS. The CENPA-CAD complex interacts with the CENPA-NAC complex, at least composed of CENPA, CENPC, CENPH, CENPM, CENPN, CENPT and CENPU.

It is found in the nucleus. Its subcellular location is the chromosome. It localises to the centromere. The protein resides in the kinetochore. Its function is as follows. Component of the CENPA-CAD (nucleosome distal) complex, a complex recruited to centromeres which is involved in assembly of kinetochore proteins, mitotic progression and chromosome segregation. May be involved in incorporation of newly synthesized CENPA into centromeres via its interaction with the CENPA-NAC complex. Modulates the kinetochore-bound levels of NDC80 complex. This is Centromere protein O (CENPO) from Homo sapiens (Human).